The primary structure comprises 130 residues: Small ribosomal subunit protein uS9 (130 aa).

Belongs to the universal ribosomal protein uS9 family.

This Streptococcus suis (strain 98HAH33) protein is Small ribosomal subunit protein uS9.